A 255-amino-acid chain; its full sequence is Ribonuclease HII (255 aa).

Positions 72-255 (RLIAGVDEAG…KTFAPVQSYC (184 aa)) constitute an RNase H type-2 domain. Residues Asp-78, Glu-79, and Asp-170 each coordinate a divalent metal cation.

The protein belongs to the RNase HII family. The cofactor is Mn(2+). It depends on Mg(2+) as a cofactor.

It is found in the cytoplasm. The catalysed reaction is Endonucleolytic cleavage to 5'-phosphomonoester.. Endonuclease that specifically degrades the RNA of RNA-DNA hybrids. The polypeptide is Ribonuclease HII (Bacillus velezensis (strain DSM 23117 / BGSC 10A6 / LMG 26770 / FZB42) (Bacillus amyloliquefaciens subsp. plantarum)).